A 465-amino-acid polypeptide reads, in one-letter code: ATP-sulfurylase 3, chloroplastic (465 aa).

The transit peptide at 1-49 (MASMSTVFPKPTSFISQPLTKSHKSDSVTTSISFPSNSKTRSLRTISVR) directs the protein to the chloroplast.

This sequence belongs to the sulfate adenylyltransferase family. Homotetramer.

The protein localises to the plastid. It localises to the chloroplast stroma. It catalyses the reaction sulfate + ATP + H(+) = adenosine 5'-phosphosulfate + diphosphate. Its pathway is sulfur metabolism; hydrogen sulfide biosynthesis; sulfite from sulfate: step 1/3. The sequence is that of ATP-sulfurylase 3, chloroplastic (APS3) from Arabidopsis thaliana (Mouse-ear cress).